Here is a 561-residue protein sequence, read N- to C-terminus: Dihydroxy-acid dehydratase (561 aa).

Position 78 (Asp78) interacts with Mg(2+). Cys119 contributes to the [2Fe-2S] cluster binding site. Positions 120 and 121 each coordinate Mg(2+). Lys121 is subject to N6-carboxylysine. Cys192 provides a ligand contact to [2Fe-2S] cluster. Glu448 is a binding site for Mg(2+). Ser474 (proton acceptor) is an active-site residue.

Belongs to the IlvD/Edd family. As to quaternary structure, homodimer. It depends on [2Fe-2S] cluster as a cofactor. The cofactor is Mg(2+).

The enzyme catalyses (2R)-2,3-dihydroxy-3-methylbutanoate = 3-methyl-2-oxobutanoate + H2O. The catalysed reaction is (2R,3R)-2,3-dihydroxy-3-methylpentanoate = (S)-3-methyl-2-oxopentanoate + H2O. Its pathway is amino-acid biosynthesis; L-isoleucine biosynthesis; L-isoleucine from 2-oxobutanoate: step 3/4. The protein operates within amino-acid biosynthesis; L-valine biosynthesis; L-valine from pyruvate: step 3/4. Functions in the biosynthesis of branched-chain amino acids. Catalyzes the dehydration of (2R,3R)-2,3-dihydroxy-3-methylpentanoate (2,3-dihydroxy-3-methylvalerate) into 2-oxo-3-methylpentanoate (2-oxo-3-methylvalerate) and of (2R)-2,3-dihydroxy-3-methylbutanoate (2,3-dihydroxyisovalerate) into 2-oxo-3-methylbutanoate (2-oxoisovalerate), the penultimate precursor to L-isoleucine and L-valine, respectively. This Sulfurimonas denitrificans (strain ATCC 33889 / DSM 1251) (Thiomicrospira denitrificans (strain ATCC 33889 / DSM 1251)) protein is Dihydroxy-acid dehydratase.